The chain runs to 125 residues: Small ribosomal subunit protein uS13 (125 aa).

Residues 90 to 125 are disordered; it reads QRHRKGLPVRGQRTKTNARTRKGPKRTVAGKKKATK.

The protein belongs to the universal ribosomal protein uS13 family. In terms of assembly, part of the 30S ribosomal subunit. Forms a loose heterodimer with protein S19. Forms two bridges to the 50S subunit in the 70S ribosome.

In terms of biological role, located at the top of the head of the 30S subunit, it contacts several helices of the 16S rRNA. In the 70S ribosome it contacts the 23S rRNA (bridge B1a) and protein L5 of the 50S subunit (bridge B1b), connecting the 2 subunits; these bridges are implicated in subunit movement. Contacts the tRNAs in the A and P-sites. This Bifidobacterium adolescentis (strain ATCC 15703 / DSM 20083 / NCTC 11814 / E194a) protein is Small ribosomal subunit protein uS13.